The sequence spans 169 residues: Small ribosomal subunit protein bS18c (169 aa).

Residues 1 to 61 (MYTSKQPFLK…RRPRIGPGDR (61 aa)) are disordered. Over residues 27–55 (QTFRKSKQTFRKFKQPFRKSKQPFRRRPR) the composition is skewed to basic residues.

This sequence belongs to the bacterial ribosomal protein bS18 family. As to quaternary structure, part of the 30S ribosomal subunit.

Its subcellular location is the plastid. The protein resides in the chloroplast. The protein is Small ribosomal subunit protein bS18c of Agrostis stolonifera (Creeping bentgrass).